Reading from the N-terminus, the 395-residue chain is Capsid protein (395 aa).

Residues 1 to 41 are compositionally biased toward basic residues; sequence MARKYAKRSKSRPRTARRSPKSRSRPRSRAPRRKAPSRPRI. The interval 1–51 is disordered; it reads MARKYAKRSKSRPRTARRSPKSRSRPRSRAPRRKAPSRPRIQRVNPVRRPM. Positions 2–9 match the Nuclear localization signal motif; it reads ARKYAKRS.

The protein resides in the host nucleus. Its subcellular location is the virion. Its function is as follows. Self-assembles to form the virion icosahedral capsid. This Chaetoceros setoense (Chaetoceros setoense DNA virus) protein is Capsid protein.